A 393-amino-acid chain; its full sequence is Cysteine protease ATG4B (393 aa).

The residue at position 1 (Met-1) is an N-acetylmethionine. Ser-34 is subject to Phosphoserine. Cys-74 (nucleophile) is an active-site residue. The residue at position 189 (Cys-189) is an S-nitrosocysteine. Active-site residues include Asp-278 and His-280. S-nitrosocysteine occurs at positions 292 and 301. Cys-292 and Cys-361 are oxidised to a cystine. Phosphoserine occurs at positions 316 and 383. Positions 388-391 (FEIL) match the LIR motif. Ser-392 is subject to Phosphoserine.

Belongs to the peptidase C54 family. As to quaternary structure, interacts with PFKP; promoting phosphorylation of ATG4B at Ser-34. Interacts with GBP7. Phosphorylation at Ser-383 and Ser-392 promotes autophagy by increasing protein delipidation activity without affecting proteolytic activation of ATG8 proteins. Phosphorylation at Ser-316 by ULK1 inhibits autophagy by decreasing both proteolytic activation and delipidation activities. Phosphorylation at Ser-316 is dephosphorylated by protein phosphatase 2A (PP2A). Phosphorylation at Ser-34 by AKT2 promotes its hydrolase activity, leading to increased proteolytic activation and delipidation of ATG8 family proteins. Phosphorylation at Ser-34 by AKT1 promotes mitochondrial localization and inhibition of the F1F0-ATP synthase activity, leading to elevation of mitochondrial reactive oxygen species (ROS). Post-translationally, ubiquitinated by RNF5, leading to its degradation by the proteasome. In terms of processing, S-nitrosylation at Cys-189 and Cys-292 in response to high glucose decreases both proteolytic activation and delipidation activities. O-glycosylated by OGT, leading to increase protease activity, thereby promoting the proteolytic activation of ATG8 family proteins. Post-translationally, forms reversible intrachain disulfide bonds in response to oxidative stress. Forms interchain disulfide bonds, leading to formation of homooligomers in response to oxidation.

It localises to the cytoplasm. The protein localises to the cytosol. It is found in the cytoplasmic vesicle. Its subcellular location is the autophagosome. The protein resides in the endoplasmic reticulum. It localises to the mitochondrion. It catalyses the reaction [protein]-C-terminal L-amino acid-glycyl-phosphatidylethanolamide + H2O = [protein]-C-terminal L-amino acid-glycine + a 1,2-diacyl-sn-glycero-3-phosphoethanolamine. The catalysed reaction is [protein]-C-terminal L-amino acid-glycyl-phosphatidylserine + H2O = [protein]-C-terminal L-amino acid-glycine + a 1,2-diacyl-sn-glycero-3-phospho-L-serine. Its activity is regulated as follows. Inhibited by N-ethylmaleimide. Redox-regulated during autophagy since reducing conditions activate ATG4A whereas an oxidizing environment such as the presence of H(2)O(2) inhibits its activity. The cysteine protease activity compounds is inhibited by styrylquinoline compounds 4-28 and LV-320. Cysteine protease that plays a key role in autophagy by mediating both proteolytic activation and delipidation of ATG8 family proteins. Required for canonical autophagy (macroautophagy), non-canonical autophagy as well as for mitophagy. The protease activity is required for proteolytic activation of ATG8 family proteins: cleaves the C-terminal amino acid of ATG8 proteins MAP1LC3A, MAP1LC3B, MAP1LC3C, GABARAPL1, GABARAPL2 and GABARAP, to reveal a C-terminal glycine. Exposure of the glycine at the C-terminus is essential for ATG8 proteins conjugation to phosphatidylethanolamine (PE) and insertion to membranes, which is necessary for autophagy. Protease activity is also required to counteract formation of high-molecular weight conjugates of ATG8 proteins (ATG8ylation): acts as a deubiquitinating-like enzyme that removes ATG8 conjugated to other proteins, such as ATG3. In addition to the protease activity, also mediates delipidation of ATG8 family proteins. Catalyzes delipidation of PE-conjugated forms of ATG8 proteins during macroautophagy. Also involved in non-canonical autophagy, a parallel pathway involving conjugation of ATG8 proteins to single membranes at endolysosomal compartments, by catalyzing delipidation of ATG8 proteins conjugated to phosphatidylserine (PS). Compared to other members of the family (ATG4A, ATG4C or ATG4C), constitutes the major protein for proteolytic activation of ATG8 proteins, while it displays weaker delipidation activity than other ATG4 paralogs. Involved in phagophore growth during mitophagy independently of its protease activity and of ATG8 proteins: acts by regulating ATG9A trafficking to mitochondria and promoting phagophore-endoplasmic reticulum contacts during the lipid transfer phase of mitophagy. The sequence is that of Cysteine protease ATG4B from Mus musculus (Mouse).